A 201-amino-acid polypeptide reads, in one-letter code: Ribosomal RNA small subunit methyltransferase G (201 aa).

Residues glycine 71, phenylalanine 76, 120–121 (LE), and arginine 134 contribute to the S-adenosyl-L-methionine site.

It belongs to the methyltransferase superfamily. RNA methyltransferase RsmG family.

The protein localises to the cytoplasm. The enzyme catalyses guanosine(527) in 16S rRNA + S-adenosyl-L-methionine = N(7)-methylguanosine(527) in 16S rRNA + S-adenosyl-L-homocysteine. Specifically methylates the N7 position of guanine in position 527 of 16S rRNA. The polypeptide is Ribosomal RNA small subunit methyltransferase G (Rhodospirillum rubrum (strain ATCC 11170 / ATH 1.1.1 / DSM 467 / LMG 4362 / NCIMB 8255 / S1)).